The following is a 427-amino-acid chain: Peptidase B (427 aa).

Residues Lys195 and Asp200 each coordinate Mn(2+). The active site involves Lys207. Residues Asp218, Asp277, and Glu279 each contribute to the Mn(2+) site. Residue Arg281 is part of the active site.

It belongs to the peptidase M17 family. In terms of assembly, homohexamer. Mn(2+) is required as a cofactor.

The protein localises to the cytoplasm. The enzyme catalyses Release of an N-terminal amino acid, Xaa, from a peptide or arylamide. Xaa is preferably Glu or Asp but may be other amino acids, including Leu, Met, His, Cys and Gln.. Its function is as follows. Probably plays an important role in intracellular peptide degradation. This is Peptidase B from Escherichia coli O127:H6 (strain E2348/69 / EPEC).